A 248-amino-acid polypeptide reads, in one-letter code: 4-hydroxy-tetrahydrodipicolinate reductase (248 aa).

Residues 8-13, 75-77, and 99-102 contribute to the NAD(+) site; these read GAKGRM, GTT, and ATNM. Catalysis depends on His-131, which acts as the Proton donor/acceptor. Position 132 (His-132) interacts with (S)-2,3,4,5-tetrahydrodipicolinate. The Proton donor role is filled by Lys-135. 141–142 is a binding site for (S)-2,3,4,5-tetrahydrodipicolinate; the sequence is GT.

Belongs to the DapB family.

It is found in the cytoplasm. It catalyses the reaction (S)-2,3,4,5-tetrahydrodipicolinate + NAD(+) + H2O = (2S,4S)-4-hydroxy-2,3,4,5-tetrahydrodipicolinate + NADH + H(+). The enzyme catalyses (S)-2,3,4,5-tetrahydrodipicolinate + NADP(+) + H2O = (2S,4S)-4-hydroxy-2,3,4,5-tetrahydrodipicolinate + NADPH + H(+). The protein operates within amino-acid biosynthesis; L-lysine biosynthesis via DAP pathway; (S)-tetrahydrodipicolinate from L-aspartate: step 4/4. Functionally, catalyzes the conversion of 4-hydroxy-tetrahydrodipicolinate (HTPA) to tetrahydrodipicolinate. This Campylobacter jejuni subsp. doylei (strain ATCC BAA-1458 / RM4099 / 269.97) protein is 4-hydroxy-tetrahydrodipicolinate reductase.